A 334-amino-acid polypeptide reads, in one-letter code: Dual specificity mitogen-activated protein kinase kinase 6 (334 aa).

Over residues 1–11 (MSQSKGKKRNP) the composition is skewed to basic residues. The tract at residues 1-34 (MSQSKGKKRNPGLKIPKEAFEQPQTSSTPPRDLD) is disordered. A d domain region spans residues 4–19 (SKGKKRNPGLKIPKEA). Positions 53-314 (LEPIVELGRG…YPELMQHPFF (262 aa)) constitute a Protein kinase domain. Residues 59–67 (LGRGAYGVV) and Lys-82 contribute to the ATP site. Asp-179 serves as the catalytic Proton acceptor. Residue Ser-207 is modified to Phosphoserine; by MAPK3. Thr-211 carries the phosphothreonine; by MAPK3 modification. The segment at 311 to 334 (HPFFTLHESKATDVASFVKSILGD) is DVD domain.

This sequence belongs to the protein kinase superfamily. STE Ser/Thr protein kinase family. MAP kinase kinase subfamily. As to quaternary structure, dimer. Interacts (via its D domain) with its substrates MAPK11, MAPK12, MAPK13 and MAPK14. Interacts (via its DVD domain) with MAP3Ks activators like MAP3K5/ASK1, MAP3K1/MEKK1, MAP3K2/MEKK2, MAP3K3/MEKK3, MAP3K4/MEKK4, MAP3K7/TAK1, MAP3K11/MLK3 and MAP3K17/TAOK2. Interacts with DCTN1. Interacts with EIF2AK2/PKR. Weakly autophosphorylated. Phosphorylated at Ser-207 and Thr-211 by the majority of M3Ks, such as MAP3K5/ASK1, MAP3K1/MEKK1, MAP3K2/MEKK2, MAP3K3/MEKK3, MAP3K4/MEKK4, MAP3K7/TAK1, MAP3K11/MLK3 and MAP3K17/TAOK2. In terms of processing, in response to genotoxic stress, MAP3K-phosphorylated MAP2K6 is ubiquitinated and degraded by the SCF(FBXO31) complex.

It localises to the nucleus. It is found in the cytoplasm. The protein resides in the cytoskeleton. It catalyses the reaction L-seryl-[protein] + ATP = O-phospho-L-seryl-[protein] + ADP + H(+). The enzyme catalyses L-threonyl-[protein] + ATP = O-phospho-L-threonyl-[protein] + ADP + H(+). The catalysed reaction is L-tyrosyl-[protein] + ATP = O-phospho-L-tyrosyl-[protein] + ADP + H(+). Its activity is regulated as follows. Activated by dual phosphorylation on Ser-207 and Thr-211 in response to a variety of cellular stresses, including UV radiation, osmotic shock, hypoxia, inflammatory cytokines, interferon gamma (IFNG), and less often by growth factors. MAP2K6/MKK6 is activated by the majority of M3Ks, such as MAP3K5/ASK1, MAP3K1/MEKK1, MAP3K2/MEKK2, MAP3K3/MEKK3, MAP3K4/MEKK4, MAP3K7/TAK1, MAP3K11/MLK3 and MAP3K17/TAOK2. In terms of biological role, dual specificity protein kinase which acts as an essential component of the MAP kinase signal transduction pathway. With MAP3K3/MKK3, catalyzes the concomitant phosphorylation of a threonine and a tyrosine residue in the MAP kinases p38 MAPK11, MAPK12, MAPK13 and MAPK14 and plays an important role in the regulation of cellular responses to cytokines and all kinds of stresses. Especially, MAP2K3/MKK3 and MAP2K6/MKK6 are both essential for the activation of MAPK11 and MAPK13 induced by environmental stress, whereas MAP2K6/MKK6 is the major MAPK11 activator in response to TNF. MAP2K6/MKK6 also phosphorylates and activates PAK6. The p38 MAP kinase signal transduction pathway leads to direct activation of transcription factors. Nuclear targets of p38 MAP kinase include the transcription factors ATF2 and ELK1. Within the p38 MAPK signal transduction pathway, MAP3K6/MKK6 mediates phosphorylation of STAT4 through MAPK14 activation, and is therefore required for STAT4 activation and STAT4-regulated gene expression in response to IL-12 stimulation. The pathway is also crucial for IL-6-induced SOCS3 expression and down-regulation of IL-6-mediated gene induction; and for IFNG-dependent gene transcription. Has a role in osteoclast differentiation through NF-kappa-B transactivation by TNFSF11, and in endochondral ossification and since SOX9 is another likely downstream target of the p38 MAPK pathway. MAP2K6/MKK6 mediates apoptotic cell death in thymocytes. Acts also as a regulator for melanocytes dendricity, through the modulation of Rho family GTPases. The polypeptide is Dual specificity mitogen-activated protein kinase kinase 6 (MAP2K6) (Bos taurus (Bovine)).